The following is a 744-amino-acid chain: CCR4-NOT transcription complex subunit 10 (744 aa).

Basic and acidic residues predominate over residues 1–16 (MAADKPADQGAEKHEG). The disordered stretch occupies residues 1–25 (MAADKPADQGAEKHEGTGQSSGITD). Alanine 2 carries the N-acetylalanine modification. Positions 74–107 (KSNQTTTDNLRQTLNQLKNQVHSAVEEMDGLDDV) form a coiled coil. A compositionally biased stretch (low complexity) spans 183-199 (NNNKNGKNETGNNNNKD). 3 disordered regions span residues 183-204 (NNNK…SNHK), 477-521 (QDPK…PPSS), and 602-634 (VSLG…PQCY). Over residues 484–495 (GAKNSNQLGGNT) the composition is skewed to polar residues. A compositionally biased stretch (low complexity) spans 496-506 (ESSESSETCSS). The span at 602 to 612 (VSLGISSNEQD) shows a compositional bias: polar residues.

Belongs to the CNOT10 family. Component of the CCR4-NOT complex; distinct complexes seem to exist that differ in the participation of probably mutually exclusive catalytic subunits. CNOT10 and CNOT11 form a subcomplex docked to the CNOT1 scaffold.

It localises to the cytoplasm. The protein localises to the nucleus. In terms of biological role, component of the CCR4-NOT complex which is one of the major cellular mRNA deadenylases and is linked to various cellular processes including bulk mRNA degradation, miRNA-mediated repression, translational repression during translational initiation and general transcription regulation. Additional complex functions may be a consequence of its influence on mRNA expression. Is not required for association of CNOT7 to the CCR4-NOT complex. This Macaca fascicularis (Crab-eating macaque) protein is CCR4-NOT transcription complex subunit 10 (CNOT10).